Here is a 342-residue protein sequence, read N- to C-terminus: UDP-N-acetylglucosamine--N-acetylmuramyl-(pentapeptide) pyrophosphoryl-undecaprenol N-acetylglucosamine transferase (342 aa).

Residues 10 to 12, Asn124, Ser177, and Gln275 contribute to the UDP-N-acetyl-alpha-D-glucosamine site; that span reads TGG.

It belongs to the glycosyltransferase 28 family. MurG subfamily.

The protein localises to the cell inner membrane. It carries out the reaction di-trans,octa-cis-undecaprenyl diphospho-N-acetyl-alpha-D-muramoyl-L-alanyl-D-glutamyl-meso-2,6-diaminopimeloyl-D-alanyl-D-alanine + UDP-N-acetyl-alpha-D-glucosamine = di-trans,octa-cis-undecaprenyl diphospho-[N-acetyl-alpha-D-glucosaminyl-(1-&gt;4)]-N-acetyl-alpha-D-muramoyl-L-alanyl-D-glutamyl-meso-2,6-diaminopimeloyl-D-alanyl-D-alanine + UDP + H(+). It participates in cell wall biogenesis; peptidoglycan biosynthesis. Cell wall formation. Catalyzes the transfer of a GlcNAc subunit on undecaprenyl-pyrophosphoryl-MurNAc-pentapeptide (lipid intermediate I) to form undecaprenyl-pyrophosphoryl-MurNAc-(pentapeptide)GlcNAc (lipid intermediate II). In Campylobacter jejuni subsp. jejuni serotype O:6 (strain 81116 / NCTC 11828), this protein is UDP-N-acetylglucosamine--N-acetylmuramyl-(pentapeptide) pyrophosphoryl-undecaprenol N-acetylglucosamine transferase.